Here is a 423-residue protein sequence, read N- to C-terminus: Putative competence-damage inducible protein (423 aa).

The protein belongs to the CinA family.

This Streptococcus pyogenes serotype M12 (strain MGAS2096) protein is Putative competence-damage inducible protein.